The chain runs to 241 residues: GDSL esterase/lipase At5g45920 (241 aa).

Residue Ser-12 is the Nucleophile of the active site. Residues Asp-189 and His-192 contribute to the active site.

This sequence belongs to the 'GDSL' lipolytic enzyme family.

This chain is GDSL esterase/lipase At5g45920, found in Arabidopsis thaliana (Mouse-ear cress).